We begin with the raw amino-acid sequence, 53 residues long: ATP synthase protein 8 (53 aa).

Residues 9 to 29 (WITSMLMFWISVSILFSTLWW) traverse the membrane as a helical segment.

It belongs to the ATPase protein 8 family. In terms of assembly, F-type ATPases have 2 components, CF(1) - the catalytic core - and CF(0) - the membrane proton channel.

It localises to the mitochondrion membrane. Functionally, mitochondrial membrane ATP synthase (F(1)F(0) ATP synthase or Complex V) produces ATP from ADP in the presence of a proton gradient across the membrane which is generated by electron transport complexes of the respiratory chain. F-type ATPases consist of two structural domains, F(1) - containing the extramembraneous catalytic core and F(0) - containing the membrane proton channel, linked together by a central stalk and a peripheral stalk. During catalysis, ATP synthesis in the catalytic domain of F(1) is coupled via a rotary mechanism of the central stalk subunits to proton translocation. Part of the complex F(0) domain. Minor subunit located with subunit a in the membrane. This Lumbricus terrestris (Common earthworm) protein is ATP synthase protein 8 (MT-ATP8).